Consider the following 100-residue polypeptide: Aspartyl/glutamyl-tRNA(Asn/Gln) amidotransferase subunit C (100 aa).

It belongs to the GatC family. In terms of assembly, heterotrimer of A, B and C subunits.

The enzyme catalyses L-glutamyl-tRNA(Gln) + L-glutamine + ATP + H2O = L-glutaminyl-tRNA(Gln) + L-glutamate + ADP + phosphate + H(+). It carries out the reaction L-aspartyl-tRNA(Asn) + L-glutamine + ATP + H2O = L-asparaginyl-tRNA(Asn) + L-glutamate + ADP + phosphate + 2 H(+). Allows the formation of correctly charged Asn-tRNA(Asn) or Gln-tRNA(Gln) through the transamidation of misacylated Asp-tRNA(Asn) or Glu-tRNA(Gln) in organisms which lack either or both of asparaginyl-tRNA or glutaminyl-tRNA synthetases. The reaction takes place in the presence of glutamine and ATP through an activated phospho-Asp-tRNA(Asn) or phospho-Glu-tRNA(Gln). This chain is Aspartyl/glutamyl-tRNA(Asn/Gln) amidotransferase subunit C, found in Staphylococcus carnosus (strain TM300).